A 404-amino-acid chain; its full sequence is Inner membrane transport protein YdiM (404 aa).

The Periplasmic segment spans residues 1 to 5 (MKNPY). A helical membrane pass occupies residues 6–26 (FPTALGLYFNYLVHGMGVLLM). At 27–43 (SLNMASLETLWQTNAAG) the chain is on the cytoplasmic side. Residues 44 to 64 (VSIVISSLGIGRLSVLLFAGL) traverse the membrane as a helical segment. Residues 65 to 84 (LSDRFGRRPFIMLGMCCYMA) are Periplasmic-facing. Residues 85–105 (FFFGILQTNNIIIAYVFGFLA) traverse the membrane as a helical segment. At 106 to 132 (GMANSFLDAGTYPSLMEAFPRSPGTAN) the chain is on the cytoplasmic side. The chain crosses the membrane as a helical span at residues 133 to 153 (ILIKAFVSSGQFLLPLIISLL). Residues 154-157 (VWAE) are Periplasmic-facing. Residues 158–178 (LWFGWSFMIAAGIMFINALFL) traverse the membrane as a helical segment. At 179-206 (YRCTFPPHPGRRLPVIKKTTSSTEHRCS) the chain is on the cytoplasmic side. The helical transmembrane segment at 207–227 (IIDLASYTLYGYISMATFYLV) threads the bilayer. At 228 to 246 (SQWLAQYGQFVAGMSYTMS) the chain is on the periplasmic side. A helical membrane pass occupies residues 247 to 267 (IKLLSIYTVGSLLCVFITAPL). At 268–273 (IRNTVR) the chain is on the cytoplasmic side. Residues 274–294 (PTTLLMLYTFISFIALFTVCL) form a helical membrane-spanning segment. The Periplasmic segment spans residues 295–296 (HP). Residues 297–317 (TFYVVIIFAFVIGFTSAGGVV) form a helical membrane-spanning segment. Residues 318–336 (QIGLTLMAERFPYAKGKAT) are Cytoplasmic-facing. A helical membrane pass occupies residues 337–357 (GIYYSAGSIATFTIPLITAHL). Residues 358-364 (SQRSIAD) are Periplasmic-facing. The chain crosses the membrane as a helical span at residues 365 to 385 (IMWFDTAIAAIGFLLALFIGL). At 386–404 (RSRKKTRHHSLKENVAPGG) the chain is on the cytoplasmic side.

Belongs to the major facilitator superfamily.

It is found in the cell inner membrane. The polypeptide is Inner membrane transport protein YdiM (ydiM) (Escherichia coli (strain K12)).